The chain runs to 551 residues: Cytochrome P450 monooxygenase sdnQ (551 aa).

The segment at 1 to 23 (MDDPSIASGFQQGTGRTTGANGT) is disordered. The segment covering 8–23 (SGFQQGTGRTTGANGT) has biased composition (polar residues). N21 carries N-linked (GlcNAc...) asparagine glycosylation. The chain crosses the membrane as a helical span at residues 41–57 (CIGTSLLVALLTTIIIY). A heme-binding site is contributed by C491.

This sequence belongs to the cytochrome P450 family. It depends on heme as a cofactor.

It localises to the membrane. Its pathway is antibiotic biosynthesis. Its function is as follows. Cytochrome P450 monooxygenase; part of the gene cluster that mediates the biosynthesis of sordarin and hypoxysordarin, glycoside antibiotics with a unique tetracyclic diterpene aglycone structure. First, the geranylgeranyl diphosphate synthase sdnC constructs GGDP from farnesyl diphosphate and isopentenyl diphosphate. The diterpene cyclase sdnA then catalyzes the cyclization of GGDP to afford cycloaraneosene. Cycloaraneosene is then hydroxylated four times by the putative cytochrome P450 monooxygenases sdnB, sdnE, sdnF and sdnH to give a hydroxylated cycloaraneosene derivative such as cycloaraneosene-8,9,13,19-tetraol. Although the order of the hydroxylations is unclear, at least C8, C9 and C13 of the cycloaraneosene skeleton are hydroxylated before the sordaricin formation. Dehydration of the 13-hydroxy group of the hydroxylated cycloaraneosene derivative might be catalyzed by an unassigned hypothetical protein such as sdnG and sdnP to construct the cyclopentadiene moiety. The FAD-dependent oxidoreductase sdnN is proposed to catalyze the oxidation at C9 of the hydroxylated cycloaraneosene derivative and also catalyze the Baeyer-Villiger oxidation to give the lactone intermediate. The presumed lactone intermediate would be hydrolyzed to give an acrolein moiety and a carboxylate moiety. Then, [4+2]cycloaddition would occur between the acrolein moiety and the cyclopentadiene moiety to give sordaricin. SdnN might also be involved in the [4+2]cycloaddition after the hypothesized oxidation to accommodate the oxidized product and prompt the [4+2]cycloaddition. GDP-6-deoxy-D-altrose may be biosynthesized from GDP-D-mannose by the putative GDP-mannose-4,6-dehydratase sdnI and the short-chain dehydrogenase sdnK. The glycosyltransferase sdnJ catalyzes the attachment of 6-deoxy-D-altrose onto the 19-hydroxy group of sordaricin to give 4'-O-demethylsordarin. The methyltransferase sdnD would complete the biosynthesis of sordarin. Sordarin can be further modified into hypoxysordarin. The unique acyl chain at the 3'-hydroxy group of hypoxysordarin would be constructed by an iterative type I PKS sdnO and the trans-acting polyketide methyltransferase sdnL. SdnL would be responsible for the introduction of an alpha-methyl group of the polyketide chain. Alternatively, the beta-lactamase-like protein sdnR might be responsible for the cleavage and transfer of the polyketide chain from the PKS sdnO to sordarin. Two putative cytochrome P450 monooxygenases, sdnQ and sdnT, might catalyze the epoxidations of the polyketide chain to complete the biosynthesis of hypoxysordarin. Transcriptional regulators sdnM and sdnS are presumably encoded for the transcriptional regulation of the expression of the sdn gene cluster. The sequence is that of Cytochrome P450 monooxygenase sdnQ from Sordaria araneosa (Pleurage araneosa).